The following is a 107-amino-acid chain: UPF0145 protein BH1111 (107 aa).

It belongs to the UPF0145 family.

This is UPF0145 protein BH1111 from Halalkalibacterium halodurans (strain ATCC BAA-125 / DSM 18197 / FERM 7344 / JCM 9153 / C-125) (Bacillus halodurans).